Consider the following 338-residue polypeptide: Holliday junction branch migration complex subunit RuvB (338 aa).

The segment at 1–180 is large ATPase domain (RuvB-L); the sequence is MERLLDNKFS…FGIIERLDYY (180 aa). The ATP site is built by Leu19, Arg20, Gly61, Lys64, Thr65, Thr66, Arg170, Tyr180, and Arg217. Residue Thr65 participates in Mg(2+) binding. Residues 181 to 251 form a small ATPAse domain (RuvB-S) region; it reads TVEELSQIVM…VAKSGLEMFE (71 aa). Residues 254-338 are head domain (RuvB-H); it reads EYGLDLVDRN…FNVKESGDKR (85 aa). 2 residues coordinate DNA: Lys309 and Arg314.

Belongs to the RuvB family. As to quaternary structure, homohexamer. Forms an RuvA(8)-RuvB(12)-Holliday junction (HJ) complex. HJ DNA is sandwiched between 2 RuvA tetramers; dsDNA enters through RuvA and exits via RuvB. An RuvB hexamer assembles on each DNA strand where it exits the tetramer. Each RuvB hexamer is contacted by two RuvA subunits (via domain III) on 2 adjacent RuvB subunits; this complex drives branch migration. In the full resolvosome a probable DNA-RuvA(4)-RuvB(12)-RuvC(2) complex forms which resolves the HJ.

It is found in the cytoplasm. It catalyses the reaction ATP + H2O = ADP + phosphate + H(+). The RuvA-RuvB-RuvC complex processes Holliday junction (HJ) DNA during genetic recombination and DNA repair, while the RuvA-RuvB complex plays an important role in the rescue of blocked DNA replication forks via replication fork reversal (RFR). RuvA specifically binds to HJ cruciform DNA, conferring on it an open structure. The RuvB hexamer acts as an ATP-dependent pump, pulling dsDNA into and through the RuvAB complex. RuvB forms 2 homohexamers on either side of HJ DNA bound by 1 or 2 RuvA tetramers; 4 subunits per hexamer contact DNA at a time. Coordinated motions by a converter formed by DNA-disengaged RuvB subunits stimulates ATP hydrolysis and nucleotide exchange. Immobilization of the converter enables RuvB to convert the ATP-contained energy into a lever motion, pulling 2 nucleotides of DNA out of the RuvA tetramer per ATP hydrolyzed, thus driving DNA branch migration. The RuvB motors rotate together with the DNA substrate, which together with the progressing nucleotide cycle form the mechanistic basis for DNA recombination by continuous HJ branch migration. Branch migration allows RuvC to scan DNA until it finds its consensus sequence, where it cleaves and resolves cruciform DNA. This is Holliday junction branch migration complex subunit RuvB from Caldicellulosiruptor saccharolyticus (strain ATCC 43494 / DSM 8903 / Tp8T 6331).